The chain runs to 488 residues: Poly(3-hydroxybutyrate) depolymerase (488 aa).

A signal peptide spans 1-27 (MVRRLWRRIAGWLAACVAILCAFPLHA). The active-site Charge relay system is S166. The region spanning 346 to 428 (APTGLAVTAT…AAVSATTKSA (83 aa)) is the Fibronectin type-III domain.

Belongs to the AB hydrolase superfamily. Lipase family.

It localises to the secreted. It carries out the reaction [(3R)-hydroxybutanoate](n) + H2O = [(3R)-hydroxybutanoate](n-2) + (3R)-hydroxybutanoate dimer + H(+). It catalyses the reaction [(3R)-hydroxybutanoate](n) + H2O = [(3R)-hydroxybutanoate](n-3) + (3R)-hydroxybutanoate trimer + H(+). The catalysed reaction is [(3R)-hydroxybutanoate](n) + H2O = [(3R)-hydroxybutanoate](n-1) + (R)-3-hydroxybutanoate + H(+). The enzyme catalyses [(3R)-hydroxybutanoate](n) + H2O = [(3R)-hydroxybutanoate](n-5) + (3R)-hydroxybutanoate pentamer + H(+). It carries out the reaction [(3R)-hydroxybutanoate](n) + H2O = [(3R)-hydroxybutanoate](n-4) + (3R)-hydroxybutanoate tetramer + H(+). Functionally, this protein degrades water-insoluble and water-soluble PHB to monomeric D(-)-3-hydroxybutyrate. This is Poly(3-hydroxybutyrate) depolymerase from Ralstonia pickettii (Burkholderia pickettii).